A 428-amino-acid chain; its full sequence is Serine--tRNA ligase (428 aa).

An L-serine-binding site is contributed by 231 to 233; it reads TAE. Residue 262 to 264 participates in ATP binding; it reads RSE. Residue glutamate 285 participates in L-serine binding. 349 to 352 lines the ATP pocket; sequence EISS. An L-serine-binding site is contributed by serine 385.

It belongs to the class-II aminoacyl-tRNA synthetase family. Type-1 seryl-tRNA synthetase subfamily. In terms of assembly, homodimer. The tRNA molecule binds across the dimer.

The protein resides in the cytoplasm. It catalyses the reaction tRNA(Ser) + L-serine + ATP = L-seryl-tRNA(Ser) + AMP + diphosphate + H(+). It carries out the reaction tRNA(Sec) + L-serine + ATP = L-seryl-tRNA(Sec) + AMP + diphosphate + H(+). Its pathway is aminoacyl-tRNA biosynthesis; selenocysteinyl-tRNA(Sec) biosynthesis; L-seryl-tRNA(Sec) from L-serine and tRNA(Sec): step 1/1. In terms of biological role, catalyzes the attachment of serine to tRNA(Ser). Is also able to aminoacylate tRNA(Sec) with serine, to form the misacylated tRNA L-seryl-tRNA(Sec), which will be further converted into selenocysteinyl-tRNA(Sec). In Staphylococcus aureus (strain MRSA252), this protein is Serine--tRNA ligase.